A 348-amino-acid polypeptide reads, in one-letter code: 3-isopropylmalate dehydrogenase (348 aa).

76 to 87 (GPKWTDPNNRPE) lines the NAD(+) pocket. Positions 94, 104, 132, and 217 each coordinate substrate. Residues Asp217, Asp241, and Asp245 each contribute to the Mg(2+) site. 275 to 287 (GSAPDIAGKNVAN) serves as a coordination point for NAD(+).

It belongs to the isocitrate and isopropylmalate dehydrogenases family. LeuB type 1 subfamily. Homodimer. Mg(2+) serves as cofactor. The cofactor is Mn(2+).

The protein localises to the cytoplasm. It carries out the reaction (2R,3S)-3-isopropylmalate + NAD(+) = 4-methyl-2-oxopentanoate + CO2 + NADH. The protein operates within amino-acid biosynthesis; L-leucine biosynthesis; L-leucine from 3-methyl-2-oxobutanoate: step 3/4. Functionally, catalyzes the oxidation of 3-carboxy-2-hydroxy-4-methylpentanoate (3-isopropylmalate) to 3-carboxy-4-methyl-2-oxopentanoate. The product decarboxylates to 4-methyl-2 oxopentanoate. This chain is 3-isopropylmalate dehydrogenase, found in Staphylococcus aureus (strain COL).